Here is a 121-residue protein sequence, read N- to C-terminus: Fluoride-specific ion channel FluC 1 (121 aa).

Transmembrane regions (helical) follow at residues 3–23, 29–49, 67–87, and 92–112; these read YLYI…LSML, IPLG…SIGA, TGLL…VTLF, and FILF…SCYL. The Na(+) site is built by glycine 71 and threonine 74.

It belongs to the fluoride channel Fluc/FEX (TC 1.A.43) family.

The protein localises to the cell membrane. The enzyme catalyses fluoride(in) = fluoride(out). Na(+) is not transported, but it plays an essential structural role and its presence is essential for fluoride channel function. Its function is as follows. Fluoride-specific ion channel. Important for reducing fluoride concentration in the cell, thus reducing its toxicity. This chain is Fluoride-specific ion channel FluC 1, found in Staphylococcus epidermidis (strain ATCC 35984 / DSM 28319 / BCRC 17069 / CCUG 31568 / BM 3577 / RP62A).